Here is a 349-residue protein sequence, read N- to C-terminus: DENN domain-containing protein 10 (349 aa).

Positions 1 to 135 constitute a uDENN domain; that stretch reads MATPELMLSL…TKGICQSDEN (135 aa). Positions 160 to 294 constitute a cDENN domain; the sequence is QFGMETIILY…ADRSDAQVIK (135 aa). In terms of domain architecture, dDENN spans 296-349; sequence ISVKTKEILSNLMSLADHADNSKLTLECLKQGHYPPATENFLFHLAAAEQLLKI.

The protein belongs to the DENND10 family.

It is found in the late endosome. Functionally, guanine nucleotide exchange factor (GEF) which may be involved in the regulation of late endocytic pathway homeostasis, including endosomal positioning, maturation and secretion. The sequence is that of DENN domain-containing protein 10 (dennd10) from Danio rerio (Zebrafish).